A 303-amino-acid chain; its full sequence is Probable cell division protein WhiA (303 aa).

Positions 272-303 (SIQQVADALEFPITKSGVNHRLRKINKIADDL) form a DNA-binding region, H-T-H motif.

This sequence belongs to the WhiA family.

Involved in cell division and chromosome segregation. The chain is Probable cell division protein WhiA from Streptococcus pyogenes serotype M6 (strain ATCC BAA-946 / MGAS10394).